A 209-amino-acid chain; its full sequence is Urease accessory protein UreG (209 aa).

14-21 (GPVGSGKT) contacts GTP.

Belongs to the SIMIBI class G3E GTPase family. UreG subfamily. As to quaternary structure, homodimer. UreD, UreF and UreG form a complex that acts as a GTP-hydrolysis-dependent molecular chaperone, activating the urease apoprotein by helping to assemble the nickel containing metallocenter of UreC. The UreE protein probably delivers the nickel.

The protein localises to the cytoplasm. Its function is as follows. Facilitates the functional incorporation of the urease nickel metallocenter. This process requires GTP hydrolysis, probably effectuated by UreG. The sequence is that of Urease accessory protein UreG from Rhodopseudomonas palustris (strain ATCC BAA-98 / CGA009).